We begin with the raw amino-acid sequence, 122 residues long: Small ribosomal subunit protein uS13 (122 aa).

Residues Arg99 to Lys122 are disordered.

It belongs to the universal ribosomal protein uS13 family. In terms of assembly, part of the 30S ribosomal subunit. Forms a loose heterodimer with protein S19. Forms two bridges to the 50S subunit in the 70S ribosome.

Located at the top of the head of the 30S subunit, it contacts several helices of the 16S rRNA. In the 70S ribosome it contacts the 23S rRNA (bridge B1a) and protein L5 of the 50S subunit (bridge B1b), connecting the 2 subunits; these bridges are implicated in subunit movement. Contacts the tRNAs in the A and P-sites. The sequence is that of Small ribosomal subunit protein uS13 from Sinorhizobium fredii (strain NBRC 101917 / NGR234).